A 505-amino-acid polypeptide reads, in one-letter code: Aspartyl/glutamyl-tRNA(Asn/Gln) amidotransferase subunit B (505 aa).

The protein belongs to the GatB/GatE family. GatB subfamily. Heterotrimer of A, B and C subunits.

The enzyme catalyses L-glutamyl-tRNA(Gln) + L-glutamine + ATP + H2O = L-glutaminyl-tRNA(Gln) + L-glutamate + ADP + phosphate + H(+). It carries out the reaction L-aspartyl-tRNA(Asn) + L-glutamine + ATP + H2O = L-asparaginyl-tRNA(Asn) + L-glutamate + ADP + phosphate + 2 H(+). In terms of biological role, allows the formation of correctly charged Asn-tRNA(Asn) or Gln-tRNA(Gln) through the transamidation of misacylated Asp-tRNA(Asn) or Glu-tRNA(Gln) in organisms which lack either or both of asparaginyl-tRNA or glutaminyl-tRNA synthetases. The reaction takes place in the presence of glutamine and ATP through an activated phospho-Asp-tRNA(Asn) or phospho-Glu-tRNA(Gln). The polypeptide is Aspartyl/glutamyl-tRNA(Asn/Gln) amidotransferase subunit B (Corynebacterium jeikeium (strain K411)).